We begin with the raw amino-acid sequence, 671 residues long: DNA ligase (671 aa).

NAD(+)-binding positions include 32–36 (DAEYD), 81–82 (SL), and Glu113. Lys115 (N6-AMP-lysine intermediate) is an active-site residue. NAD(+)-binding residues include Arg136, Glu173, Lys290, and Lys314. Residues Cys408, Cys411, Cys426, and Cys432 each coordinate Zn(2+). One can recognise a BRCT domain in the interval 593–671 (EIDSPFAGKT…EAEMIRLLGA (79 aa)).

It belongs to the NAD-dependent DNA ligase family. LigA subfamily. Mg(2+) is required as a cofactor. The cofactor is Mn(2+).

It catalyses the reaction NAD(+) + (deoxyribonucleotide)n-3'-hydroxyl + 5'-phospho-(deoxyribonucleotide)m = (deoxyribonucleotide)n+m + AMP + beta-nicotinamide D-nucleotide.. Functionally, DNA ligase that catalyzes the formation of phosphodiester linkages between 5'-phosphoryl and 3'-hydroxyl groups in double-stranded DNA using NAD as a coenzyme and as the energy source for the reaction. It is essential for DNA replication and repair of damaged DNA. In Salmonella paratyphi A (strain ATCC 9150 / SARB42), this protein is DNA ligase.